Reading from the N-terminus, the 264-residue chain is Diphthine synthase (264 aa).

Residues leucine 10, aspartate 87, valine 90, 115–116 (SI), leucine 166, alanine 209, and histidine 234 each bind S-adenosyl-L-methionine.

Belongs to the diphthine synthase family. In terms of assembly, homodimer.

It catalyses the reaction 2-[(3S)-amino-3-carboxypropyl]-L-histidyl-[translation elongation factor 2] + 3 S-adenosyl-L-methionine = diphthine-[translation elongation factor 2] + 3 S-adenosyl-L-homocysteine + 3 H(+). It participates in protein modification; peptidyl-diphthamide biosynthesis. Its function is as follows. S-adenosyl-L-methionine-dependent methyltransferase that catalyzes the trimethylation of the amino group of the modified target histidine residue in translation elongation factor 2 (EF-2), to form an intermediate called diphthine. The three successive methylation reactions represent the second step of diphthamide biosynthesis. The sequence is that of Diphthine synthase from Thermococcus gammatolerans (strain DSM 15229 / JCM 11827 / EJ3).